We begin with the raw amino-acid sequence, 87 residues long: Small ribosomal subunit protein bS20 (87 aa).

It belongs to the bacterial ribosomal protein bS20 family.

Its function is as follows. Binds directly to 16S ribosomal RNA. This Clostridium botulinum (strain Alaska E43 / Type E3) protein is Small ribosomal subunit protein bS20.